We begin with the raw amino-acid sequence, 318 residues long: Thioredoxin reductase (318 aa).

36-43 (TGMQQGGQ) is a binding site for FAD. A disulfide bridge links cysteine 136 with cysteine 139. 286 to 295 (DVMDHNYRQA) serves as a coordination point for FAD.

This sequence belongs to the class-II pyridine nucleotide-disulfide oxidoreductase family. Homodimer. Requires FAD as cofactor.

The protein localises to the cytoplasm. The enzyme catalyses [thioredoxin]-dithiol + NADP(+) = [thioredoxin]-disulfide + NADPH + H(+). This is Thioredoxin reductase (trxB) from Vibrio cholerae serotype O1 (strain ATCC 39315 / El Tor Inaba N16961).